The chain runs to 389 residues: Aspartic protease 6 (389 aa).

Positions 1 to 15 (MKTFILLAVLGLASA) are cleaved as a signal peptide. One can recognise a Peptidase A1 domain in the interval 71–384 (YLGNITIGTP…DIGNKRMGFA (314 aa)). The N-linked (GlcNAc...) asparagine glycan is linked to Asn-74. The active site involves Asp-89. Cys-102 and Cys-106 are disulfide-bonded. Asp-277 is a catalytic residue. Residues Cys-312 and Cys-344 are joined by a disulfide bond.

This sequence belongs to the peptidase A1 family. Glycosylated. Has phosphorylcholine-substituted oligosaccharide N-glycans. As to expression, expressed in intestine, muscles, pharynx and hypodermis.

It is found in the secreted. In terms of biological role, aspartic protease. This is Aspartic protease 6 from Caenorhabditis elegans.